Consider the following 560-residue polypeptide: 2-hydroxyacyl-CoA lyase (560 aa).

Position 49 (Glu49) interacts with thiamine diphosphate. The Mg(2+) site is built by Asp446 and Asn473. The Peroxisomal target signal 1 (PTS1) signature appears at 558 to 560 (PRL).

Belongs to the TPP enzyme family. It depends on Mg(2+) as a cofactor. Thiamine diphosphate serves as cofactor.

The protein resides in the cytoplasm. It is found in the peroxisome matrix. The enzyme catalyses an (R)-2-hydroxy-long-chain-fatty acyl-CoA = a long-chain fatty aldehyde + formyl-CoA. It catalyses the reaction a 2-hydroxy-3-methyl fatty acyl-CoA = a 2-methyl-branched fatty aldehyde + formyl-CoA. Functionally, catalyzes a carbon-carbon cleavage reaction; cleaves a 2-hydroxy-3-methylacyl-CoA into formyl-CoA and a 2-methyl-branched fatty aldehyde. This Saccharomyces cerevisiae (strain ATCC 204508 / S288c) (Baker's yeast) protein is 2-hydroxyacyl-CoA lyase.